The following is a 164-amino-acid chain: Lipoprotein signal peptidase (164 aa).

Transmembrane regions (helical) follow at residues 12–32 (WLWL…LILQ), 70–90 (WFFA…MYRS), and 102–122 (ALII…GFVV). Residues aspartate 123 and aspartate 141 contribute to the active site. Residues 137–157 (FNLADTAICVGAALIVLEGFL) traverse the membrane as a helical segment.

It belongs to the peptidase A8 family.

The protein resides in the cell inner membrane. The enzyme catalyses Release of signal peptides from bacterial membrane prolipoproteins. Hydrolyzes -Xaa-Yaa-Zaa-|-(S,diacylglyceryl)Cys-, in which Xaa is hydrophobic (preferably Leu), and Yaa (Ala or Ser) and Zaa (Gly or Ala) have small, neutral side chains.. The protein operates within protein modification; lipoprotein biosynthesis (signal peptide cleavage). Its function is as follows. This protein specifically catalyzes the removal of signal peptides from prolipoproteins. The chain is Lipoprotein signal peptidase from Escherichia coli O9:H4 (strain HS).